Consider the following 449-residue polypeptide: Adenylosuccinate synthetase (449 aa).

GTP-binding positions include 37 to 43 (GDEGKGK) and 65 to 67 (GHT). Residue aspartate 38 is the Proton acceptor of the active site. Mg(2+) is bound by residues aspartate 38 and glycine 65. IMP-binding positions include 38–41 (DEGK), 63–66 (NAGH), threonine 155, arginine 169, asparagine 247, threonine 262, and arginine 326. Residue histidine 66 is the Proton donor of the active site. Substrate is bound at residue 322 to 328 (VTTKRKR). Residues arginine 328, 354 to 356 (KLD), and 437 to 439 (GVG) each bind GTP.

Belongs to the adenylosuccinate synthetase family. As to quaternary structure, homodimer. The cofactor is Mg(2+).

It is found in the cytoplasm. The catalysed reaction is IMP + L-aspartate + GTP = N(6)-(1,2-dicarboxyethyl)-AMP + GDP + phosphate + 2 H(+). The protein operates within purine metabolism; AMP biosynthesis via de novo pathway; AMP from IMP: step 1/2. Its function is as follows. Plays an important role in the de novo pathway and in the salvage pathway of purine nucleotide biosynthesis. Catalyzes the first committed step in the biosynthesis of AMP from IMP. This Drosophila willistoni (Fruit fly) protein is Adenylosuccinate synthetase.